A 339-amino-acid polypeptide reads, in one-letter code: Dihydroorotate dehydrogenase (quinone) (339 aa).

FMN-binding positions include 61-65 and Thr-85; that span reads AGLDK. Lys-65 contributes to the substrate binding site. 110 to 114 serves as a coordination point for substrate; the sequence is NRMGF. Positions 138 and 171 each coordinate FMN. Asn-171 is a substrate binding site. Ser-174 (nucleophile) is an active-site residue. Asn-176 is a binding site for substrate. Residues Lys-216 and Thr-244 each coordinate FMN. Residue 245 to 246 participates in substrate binding; sequence NT. FMN is bound by residues Gly-267, Gly-296, and 317–318; that span reads YS.

It belongs to the dihydroorotate dehydrogenase family. Type 2 subfamily. As to quaternary structure, monomer. The cofactor is FMN.

It is found in the cell membrane. It catalyses the reaction (S)-dihydroorotate + a quinone = orotate + a quinol. It functions in the pathway pyrimidine metabolism; UMP biosynthesis via de novo pathway; orotate from (S)-dihydroorotate (quinone route): step 1/1. Catalyzes the conversion of dihydroorotate to orotate with quinone as electron acceptor. The protein is Dihydroorotate dehydrogenase (quinone) of Teredinibacter turnerae (strain ATCC 39867 / T7901).